Reading from the N-terminus, the 248-residue chain is 3,4-dihydroxyphthalate decarboxylase (248 aa).

Residue Glu90 is the Proton donor/acceptor of the active site. Glu90, His109, His111, and His177 together coordinate a divalent metal cation.

It belongs to the aldolase class II family. A divalent metal cation is required as a cofactor.

The enzyme catalyses 3,4-dihydroxyphthalate + H(+) = 3,4-dihydroxybenzoate + CO2. It participates in xenobiotic degradation; phthalate degradation. Its function is as follows. Catalyzes the decarboxylation of 3,4-dihydroxyphthalate to protocatechuate (3,4-dihydroxybenzoate) during phthalate metabolism. This Arthrobacter keyseri protein is 3,4-dihydroxyphthalate decarboxylase.